Consider the following 104-residue polypeptide: UPF0473 protein SH1304 (104 aa).

It belongs to the UPF0473 family.

This Staphylococcus haemolyticus (strain JCSC1435) protein is UPF0473 protein SH1304.